We begin with the raw amino-acid sequence, 197 residues long: MATRGGPMVAGTDGNDFEFRQRVAGTYQISLLNKSRLKYCIFFHALLFFVMLAKLTSDILDHLDIFVLEIEELEVPPPLWWEYVWAASLLTSFLGLSAARGNKVREMQKYMVAILLFAILPLFYCFAYYFSDVWEFATLDKSVELDETDIFVWRGYPYGVFWYAFCFVGFQVHGFTLYFAYNLVKAWKARTATRKFQ.

The Cytoplasmic portion of the chain corresponds to 1–39 (MATRGGPMVAGTDGNDFEFRQRVAGTYQISLLNKSRLKY). Residues 40–60 (CIFFHALLFFVMLAKLTSDIL) form a helical membrane-spanning segment. Over 61 to 78 (DHLDIFVLEIEELEVPPP) the chain is Lumenal. The chain crosses the membrane as a helical span at residues 79–99 (LWWEYVWAASLLTSFLGLSAA). Residues 100–109 (RGNKVREMQK) are Cytoplasmic-facing. A helical transmembrane segment spans residues 110–130 (YMVAILLFAILPLFYCFAYYF). Residues 131–159 (SDVWEFATLDKSVELDETDIFVWRGYPYG) are Lumenal-facing. The helical transmembrane segment at 160-180 (VFWYAFCFVGFQVHGFTLYFA) threads the bilayer. Over 181–197 (YNLVKAWKARTATRKFQ) the chain is Cytoplasmic.

It belongs to the jagunal family.

The protein localises to the endoplasmic reticulum membrane. Its function is as follows. Required for endoplasmic reticulum organization and proper vesicular traffic during vitellogenesis. Required for oocyte and bristle growth. This is Protein jagunal from Drosophila melanogaster (Fruit fly).